The following is a 529-amino-acid chain: Protein PAT1 homolog 2 (529 aa).

The interval 153-183 (QILQQQQRWRRRRSPTARSVPAQKPWSREPA) is disordered.

It belongs to the PAT1 family. In terms of assembly, interacts with LSM1.

The protein localises to the cytoplasm. Its subcellular location is the nucleus. RNA-binding protein that acts as a translational repressor. In Mus musculus (Mouse), this protein is Protein PAT1 homolog 2 (Patl2).